A 255-amino-acid chain; its full sequence is Probable transcriptional regulatory protein Rcas_0718 (255 aa).

Belongs to the TACO1 family.

The protein localises to the cytoplasm. In Roseiflexus castenholzii (strain DSM 13941 / HLO8), this protein is Probable transcriptional regulatory protein Rcas_0718.